The following is a 510-amino-acid chain: Probable cytosol aminopeptidase (510 aa).

Lys272 and Asp277 together coordinate Mn(2+). Residue Lys284 is part of the active site. Mn(2+) contacts are provided by Asp296, Asp355, and Glu357. The active site involves Arg359.

Belongs to the peptidase M17 family. Requires Mn(2+) as cofactor.

It is found in the cytoplasm. The enzyme catalyses Release of an N-terminal amino acid, Xaa-|-Yaa-, in which Xaa is preferably Leu, but may be other amino acids including Pro although not Arg or Lys, and Yaa may be Pro. Amino acid amides and methyl esters are also readily hydrolyzed, but rates on arylamides are exceedingly low.. It catalyses the reaction Release of an N-terminal amino acid, preferentially leucine, but not glutamic or aspartic acids.. Presumably involved in the processing and regular turnover of intracellular proteins. Catalyzes the removal of unsubstituted N-terminal amino acids from various peptides. The protein is Probable cytosol aminopeptidase of Synechococcus sp. (strain JA-3-3Ab) (Cyanobacteria bacterium Yellowstone A-Prime).